Consider the following 130-residue polypeptide: Small ribosomal subunit protein uS8 (130 aa).

Belongs to the universal ribosomal protein uS8 family. Part of the 30S ribosomal subunit. Contacts proteins S5 and S12.

Functionally, one of the primary rRNA binding proteins, it binds directly to 16S rRNA central domain where it helps coordinate assembly of the platform of the 30S subunit. The chain is Small ribosomal subunit protein uS8 from Actinobacillus succinogenes (strain ATCC 55618 / DSM 22257 / CCUG 43843 / 130Z).